The chain runs to 457 residues: Proline-specific permease ProY (457 aa).

At 1–17 the chain is on the cytoplasmic side; it reads MESKNKLKRGLSTRHIR. 2 helical membrane-spanning segments follow: residues 18 to 38 and 39 to 59; these read FMAL…DAIK and MAGP…YIIM. The Cytoplasmic segment spans residues 60-84; the sequence is RALGEMSVHNPAASSFSRYAQENLG. A helical membrane pass occupies residues 85-105; the sequence is PLAGYITGWTYCFEILIVAIA. The Periplasmic portion of the chain corresponds to 106 to 113; the sequence is DVTAFGIY. Residues 114–134 traverse the membrane as a helical segment; it reads MGVWFPTVPHWIWVLSVVLII. Residues 135 to 156 lie on the Cytoplasmic side of the membrane; the sequence is CAVNLMSVKVFGELEFWFSFFK. Residues 157 to 177 form a helical membrane-spanning segment; that stretch reads VATIIIMIVAGFGIIIWGIGN. The Periplasmic segment spans residues 178–197; sequence GGQPTGIHNLWSNGGFFSNG. The helical transmembrane segment at 198 to 218 threads the bilayer; the sequence is WLGMVMSLQMVMFAYGGIEII. At 219–242 the chain is on the cytoplasmic side; sequence GITAGEAKDPEKSIPRAINSVPMR. The helical transmembrane segment at 243-263 threads the bilayer; it reads ILVFYVGTLFVIMSIYPWNQV. The Periplasmic portion of the chain corresponds to 264 to 277; that stretch reads GTAGSPFVLTFQHM. A helical membrane pass occupies residues 278–298; it reads GITFAASILNFVVLTASLSAI. The Cytoplasmic portion of the chain corresponds to 299–331; sequence NSDVFGVGRMLHGMAEQGSAPKIFSKTSRRGIP. A helical transmembrane segment spans residues 332-352; the sequence is WVTVLVMTTALLFAVYLNYIM. Residues 353–355 are Periplasmic-facing; that stretch reads PEN. The helical transmembrane segment at 356–376 threads the bilayer; that stretch reads VFLVIASLATFATVWVWIMIL. The Cytoplasmic portion of the chain corresponds to 377–399; sequence LSQIAFRRRLPPEEVKALKFKVP. A helical membrane pass occupies residues 400–420; the sequence is GGVATTIGGLIFLLFIIGLIG. Over 421 to 424 the chain is Periplasmic; that stretch reads YHPD. The chain crosses the membrane as a helical span at residues 425–445; it reads TRISLYVGFAWIVVLLIGWMF. Topologically, residues 446–457 are cytoplasmic; it reads KRRHDRQLAENQ.

The protein belongs to the amino acid-polyamine-organocation (APC) superfamily. Amino acid transporter (AAT) (TC 2.A.3.1) family.

The protein localises to the cell inner membrane. Permease that is involved in the transport across the cytoplasmic membrane of proline. The sequence is that of Proline-specific permease ProY (proY) from Escherichia coli O157:H7.